Consider the following 297-residue polypeptide: GATA transcription factor 24 (297 aa).

Residues 73–108 form the Tify domain; it reads GIENGDQLTLSFQGQVYVFDRVSPEKVQAVLLLLGG. The region spanning 143 to 185 is the CCT domain; it reads RLASLLRFREKRKGRNFDKTIRYTVRKEVALRMQRKKGQFTSA. The tract at residues 178-203 is disordered; the sequence is KKGQFTSAKSSNDDSGSTGSDWGSNQ. Low complexity predominate over residues 190-201; that stretch reads DDSGSTGSDWGS. The segment at 213–269 adopts a GATA-type zinc-finger fold; it reads QKPEVLCRHCGTSEKSTPMMRRGPDGPRTLCNACGLMWANKGTLRDLSKVPPPQTPQ.

This sequence belongs to the type IV zinc-finger family. Class C subfamily. In terms of tissue distribution, predominantly expressed in shoot apices, inflorescences and roots.

It localises to the nucleus. In terms of biological role, transcriptional activator that specifically binds 5'-GATA-3' or 5'-GAT-3' motifs within gene promoters. This Arabidopsis thaliana (Mouse-ear cress) protein is GATA transcription factor 24 (GATA24).